Here is a 369-residue protein sequence, read N- to C-terminus: Replication factor C subunit 5 (369 aa).

The segment at 21–40 is disordered; the sequence is INKGKDVVGFGPPPQSKATP. 79 to 86 provides a ligand contact to ATP; it reads GPPGTGKT.

Belongs to the activator 1 small subunits family. Heterotetramer of subunits RFC2, RFC3, RFC4 and RFC5 that can form a complex with RFC1.

Its subcellular location is the nucleus. Functions in cell replication and proliferation. May be involved in chromatin assembly and remodeling. Plays a role in the negative control of pathogenesis-related gene expression and systemic acquired resistance (SAR). This chain is Replication factor C subunit 5 (RFC5), found in Arabidopsis thaliana (Mouse-ear cress).